A 793-amino-acid chain; its full sequence is DnaJ homolog subfamily C member 10 (793 aa).

The N-terminal stretch at 1 to 32 is a signal peptide; sequence MGVWLNRDEFIRDVKRISLCLLVLYVVIVVGT. Residues 35 to 100 enclose the J domain; the sequence is NFYSLLGVSK…DLRKKYDKYG (66 aa). The 103-residue stretch at 130–232 folds into the Thioredoxin 1 domain; it reads EIITLERREF…ESLVSFAMQH (103 aa). A disulfide bond links Cys158 and Cys161. Trxb stretches follow at residues 235–350 and 348–463; these read TTVT…LPDF and PDFE…PQNF. 3 consecutive Thioredoxin domains span residues 454–553, 557–665, and 671–776; these read HVTT…IEDL, SVVS…SWGL, and ASID…ALIY. The cysteines at positions 480 and 483 are disulfide-linked. N-linked (GlcNAc...) asparagine glycosylation is present at Asn530. Disulfide bonds link Cys588–Cys591 and Cys700–Cys703. The Prevents secretion from ER motif lies at 790 to 793; the sequence is KDEL.

As to quaternary structure, interacts with HSPA5 (via its J domain). Interacts with EDEM1.

It is found in the endoplasmic reticulum lumen. In terms of biological role, endoplasmic reticulum disulfide reductase involved both in the correct folding of proteins and degradation of misfolded proteins. Required for efficient folding of proteins in the endoplasmic reticulum by catalyzing the removal of non-native disulfide bonds formed during the folding of proteins, such as LDLR. Also involved in endoplasmic reticulum-associated degradation (ERAD) by reducing incorrect disulfide bonds in misfolded glycoproteins recognized by EDEM1. Interaction with HSPA5 is required its activity, not for the disulfide reductase activity, but to facilitate the release of DNAJC10 from its substrate. Promotes apoptotic signaling pathway in response to endoplasmic reticulum stress. The polypeptide is DnaJ homolog subfamily C member 10 (Dnajc10) (Rattus norvegicus (Rat)).